We begin with the raw amino-acid sequence, 173 residues long: Ribonuclease H (173 aa).

The tract at residues 1–20 is disordered; sequence MKATSKAKTHPPGATAAKDP. The region spanning 20-162 is the RNase H type-1 domain; that stretch reads PQKQVIIYTD…CDVLSKEAAG (143 aa). Mg(2+)-binding residues include D29, E67, D89, and D154.

The protein belongs to the RNase H family. As to quaternary structure, monomer. It depends on Mg(2+) as a cofactor.

The protein resides in the cytoplasm. The enzyme catalyses Endonucleolytic cleavage to 5'-phosphomonoester.. Its function is as follows. Endonuclease that specifically degrades the RNA of RNA-DNA hybrids. In Syntrophus aciditrophicus (strain SB), this protein is Ribonuclease H.